We begin with the raw amino-acid sequence, 688 residues long: Protein sel-1 homolog 2 (688 aa).

A signal peptide spans 1 to 18 (MNPLALLVEILIIIEVTT). Residues 19 to 662 (KNTEAERYNR…KWKWLKLDST (644 aa)) are Extracellular-facing. N-linked (GlcNAc...) asparagine glycosylation occurs at Asn34. Sel1-like repeat units follow at residues 107–142 (GDELFKMGNKILQESKSQKQKTEAYTLFTRAANMGN), 143–178 (LKAMEKMADAWLFGSFGMQNITAAIQLYESLAKEGS), 179–214 (YKAQNALGFLSSYGIGMEYDQAKALIYYTFGSAGGS), 215–250 (MMSQMILGYRYLSGINVLQNCEVALNHYKKVADYIA), 297–333 (VQIQVSLGQLHLIGRKGLDQDYSKALYYFLKAAKAGS), 334–370 (ANAMAFIGKMYFEGNAAAPQNNATAFKYFSMAASKGN), 371–406 (AIGLHGLGLLYFHGKGVPVNYGEALKYFQKAAEKGW), 407–442 (PNAQFQLGFMYYSGSGVWKDYKLAFKYFYLASQSGQ), 443–478 (PLAIYYLAEMYATGTGVLRSCRTAVELYKGVCELGH), 551–586 (AFARVKIGDYHYYGYGTKKDYETAATHYSIAADKHH), and 588–623 (AQAMFNLAYMYEHGLGIAKDIHLARRLYDMAAQTSP). Residue Asn162 is glycosylated (N-linked (GlcNAc...) asparagine). Residues 663-683 (VGPYWDLLVIGLIVAMLIFLL) form a helical membrane-spanning segment. Residues 684–688 (RNRHR) are Cytoplasmic-facing.

It belongs to the sel-1 family.

The protein resides in the membrane. Its subcellular location is the cell projection. It is found in the cilium. It localises to the nucleus speckle. The sequence is that of Protein sel-1 homolog 2 (Sel1l2) from Mus musculus (Mouse).